Reading from the N-terminus, the 158-residue chain is Snaclec coagulation factor X-activating enzyme light chain 2 (158 aa).

A signal peptide spans 1 to 24 (MGRFISVSFGLLVVFLSLSGTGAG). Disulfide bonds link C27–C38, C55–C152, and C127–C144. The region spanning 34–153 (YRYFCYRVFK…CEERYLFVCK (120 aa)) is the C-type lectin domain. Residue N82 is glycosylated (N-linked (GlcNAc...) (complex) asparagine).

It belongs to the snaclec family. In terms of assembly, heterotrimer; disulfide-linked. The heterotrimer consists of 1 heavy chain (a metalloproteinase) and 2 light chains: LC1 and LC2. N-glycosylated; probably required for conformation. Removal of easily accessible sugars does not change its functional capacity, but removal of the core sugars with N-glycanase causes a virtually complete loss of enzyme activity, apparently as a result of major conformational changes in the molecule. Not O-glycosylated. As to expression, expressed by the venom gland.

The protein resides in the secreted. Regulatory subunit of the blood coagulation factor X- and IX-activating enzyme. The enzyme activates coagulation factor X (F10) by cleaving the Arg-Ile bond and is also able to activate coagulation factor IX (F9) and protein S (PROS1) by specific cleavage of Arg-Ile and Arg-Val bonds. May serve as an exosite by which the enzyme recognizes and binds to the Gla domain of factor X (F10) and factor IX (F9) in a calcium-dependent manner. This is Snaclec coagulation factor X-activating enzyme light chain 2 (LC2) from Daboia siamensis (Eastern Russel's viper).